Consider the following 1042-residue polypeptide: SWI/SNF-related matrix-associated actin-dependent regulator of chromatin subfamily A member 1 (1042 aa).

Residues 25–82 are disordered; the sequence is EDEQPGPSTSQEEGAAAAATEATAATEKGEKKKEKNVSSFQLKLAAKAPKSEKEMDPE. Positions 36-50 are enriched in low complexity; the sequence is EEGAAAAATEATAAT. Composition is skewed to basic and acidic residues over residues 51 to 60 and 73 to 82; these read EKGEKKKEKN and PKSEKEMDPE. Phosphoserine is present on residues Ser-116 and Ser-119. A Helicase ATP-binding domain is found at 195–360; that stretch reads ISLYENGVNG…WALLNFLLPD (166 aa). 208–215 is an ATP binding site; the sequence is DEMGLGKT. The DEAH box motif lies at 311–314; the sequence is DEAH. Residues 490–641 enclose the Helicase C-terminal domain; the sequence is VLDKLLAKLK…SIVIQQGRLI (152 aa). Residues Lys-650, Lys-716, and Lys-738 each participate in a glycyl lysine isopeptide (Lys-Gly) (interchain with G-Cter in SUMO2) cross-link. The disordered stretch occupies residues 819–849; that stretch reads EQKKIDGAEPLTPEETEEKEKLLTQGFTNWT. Over residues 828 to 837 the composition is skewed to basic and acidic residues; it reads PLTPEETEEK. Residues 843–895 form the SANT 1 domain; the sequence is QGFTNWTKRDFNQFIKANEKYGRDDIDNIAREVEGKSPEEVMEYSAVFWERCN. Tyr-942 is modified (phosphotyrosine). The SANT 2 domain maps to 946–1010; the sequence is KGKNYTEEED…QRRCNTLISL (65 aa).

Belongs to the SNF2/RAD54 helicase family. ISWI subfamily. In terms of assembly, may form homodimers. Component of the ACF-1 ISWI chromatin remodeling complex at least composed of SMARCA1 and BAZ1A, which regulates the spacing of histone octamers on the DNA template to facilitate access to DNA. Within the complex interacts with BAZ1A; the interaction is direct. Component of the WICH-1 ISWI chromatin remodeling complex at least composed of SMARCA1 and BAZ1B/WSTF. Within the complex interacts with BAZ1B/WSTF. Component of the NoRC-1 ISWI chromatin remodeling complex at least composed of SMARCA1 and BAZ2A/TIP5. Within the complex interacts with BAZ2A/TIP5. Component of the BRF-1 ISWI chromatin remodeling complex at least composed of SMARCA1 and BAZ2B. Within the complex interacts with BAZ2B. Component of the NURF-1 ISWI chromatin remodeling complex (also called the nucleosome-remodeling factor (NURF) complex) at least composed of SMARCA1, BPTF, RBBP4 and RBBP7. Within the complex interacts with BPTF. Within the complex interacts with RBBP4 and RBBP7. Component of the CERF-1 ISWI chromatin remodeling complex (also called the CECR2-containing-remodeling factor (CERF) complex) at least composed of CECR2 and SMARCA1. LUZP1 is detected as part of the CERF-1 complex in embryonic stem cells where it is involved in complex stabilization but is not detected in the complex in the testis. Component of the RSF-1 ISWI chromatin remodeling complex at least composed of SMARCA1 and RSF1. Within the complex interacts with RSF1. Interacts with PRLR. Interacts with ERCC6. May form homodimers. Component of the BPFT-SMARCA1 complex at least composed of SMARCA1, BPFT, RBBP4 and RBBP7; the complex is catalytically inactive and does not remodel chromatin. Within the complex interacts with BPTF, RBBP4 and RBBP7. Component of the BAZ1A-1-SMARCA1 complex at least composed of SMARCA1 and BAZ1A; the complex is catalytically inactive and does not remodel chromatin. Component of the BAZ1B-1-SMARCA1 complex at least composed of SMARCA1 and BAZ1B; the complex is catalytically inactive and does not remodel chromatin. As to expression, expressed in lung, breast, kidney, ovary, skeletal muscle and brain. Mainly expressed in non-neuronal tissues such as lung, breast, kidney, and ovary.

Its subcellular location is the nucleus. It localises to the chromosome. The catalysed reaction is ATP + H2O = ADP + phosphate + H(+). Its function is as follows. ATPase that possesses intrinsic ATP-dependent chromatin-remodeling activity. ATPase activity is substrate-dependent, and is increased when nucleosomes are the substrate, but is also catalytically active when DNA alone is the substrate. Catalytic subunit of ISWI chromatin-remodeling complexes, which form ordered nucleosome arrays on chromatin and facilitate access to DNA during DNA-templated processes such as DNA replication, transcription, and repair. Within the ISWI chromatin-remodeling complexes, slides edge- and center-positioned histone octamers away from their original location on the DNA template. Catalytic activity and histone octamer sliding propensity is regulated and determined by components of the ISWI chromatin-remodeling complexes. The BAZ1A-, BAZ1B-, BAZ2A- and BAZ2B-containing ISWI chromatin-remodeling complexes regulate the spacing of nucleosomes along the chromatin and have the ability to slide mononucleosomes to the center of a DNA template. The CECR2- and RSF1-containing ISWI chromatin-remodeling complexes do not have the ability to slide mononucleosomes to the center of a DNA template. Within the NURF-1 and CERF-1 ISWI chromatin remodeling complexes, nucleosomes are the preferred substrate for its ATPase activity. Within the NURF-1 ISWI chromatin-remodeling complex, binds to the promoters of En1 and En2 to positively regulate their expression and promote brain development. May promote neurite outgrowth. May be involved in the development of luteal cells. Facilitates nucleosome assembly during DNA replication, ensuring replication fork progression and genomic stability by preventing replication stress and nascent DNA gaps. Catalytically inactive when either DNA or nucleosomes are the substrate and does not possess chromatin-remodeling activity. Acts as a negative regulator of chromatin remodelers by generating inactive complexes. The sequence is that of SWI/SNF-related matrix-associated actin-dependent regulator of chromatin subfamily A member 1 from Homo sapiens (Human).